The sequence spans 67 residues: Minor structural pilin EpdD (67 aa).

Positions Met-1–Gly-13 are excised as a propeptide. The QXSXEXXXL motif lies at Gln-14 to Leu-22.

In terms of processing, the N-terminus is cleaved by the prepilin peptidase EppA, which recognizes the class III signal sequence. Post-translationally, N-glycosylated. Glycosylation is AglB-dependent. The N-glycosylation does not occur unless the signal peptide has been cleaved first.

The protein localises to the secreted. It is found in the cell surface. The protein resides in the fimbrium. Minor component of the type IV-like pili. Essential for pili formation. The polypeptide is Minor structural pilin EpdD (Methanococcus maripaludis (strain DSM 14266 / JCM 13030 / NBRC 101832 / S2 / LL)).